We begin with the raw amino-acid sequence, 131 residues long: D-ribose pyranase (131 aa).

The active-site Proton donor is the H20. Substrate contacts are provided by residues D28, H98, and 120-122 (YAN).

It belongs to the RbsD / FucU family. RbsD subfamily. As to quaternary structure, homodecamer.

The protein localises to the cytoplasm. The catalysed reaction is beta-D-ribopyranose = beta-D-ribofuranose. Its pathway is carbohydrate metabolism; D-ribose degradation; D-ribose 5-phosphate from beta-D-ribopyranose: step 1/2. In terms of biological role, catalyzes the interconversion of beta-pyran and beta-furan forms of D-ribose. This chain is D-ribose pyranase, found in Bacillus cereus (strain B4264).